We begin with the raw amino-acid sequence, 276 residues long: NADPH-dependent 7-cyano-7-deazaguanine reductase (276 aa).

Residue 80 to 82 (IES) coordinates substrate. 82–83 (SK) is a binding site for NADPH. The Thioimide intermediate role is filled by Cys-178. Residue Asp-185 is the Proton donor of the active site. A substrate-binding site is contributed by 217-218 (HE). Residue 246-247 (RG) participates in NADPH binding.

This sequence belongs to the GTP cyclohydrolase I family. QueF type 2 subfamily. In terms of assembly, homodimer.

Its subcellular location is the cytoplasm. The enzyme catalyses 7-aminomethyl-7-carbaguanine + 2 NADP(+) = 7-cyano-7-deazaguanine + 2 NADPH + 3 H(+). It functions in the pathway tRNA modification; tRNA-queuosine biosynthesis. In terms of biological role, catalyzes the NADPH-dependent reduction of 7-cyano-7-deazaguanine (preQ0) to 7-aminomethyl-7-deazaguanine (preQ1). The polypeptide is NADPH-dependent 7-cyano-7-deazaguanine reductase (Teredinibacter turnerae (strain ATCC 39867 / T7901)).